A 307-amino-acid polypeptide reads, in one-letter code: D-alanine--D-alanine ligase (307 aa).

The 200-residue stretch at 105 to 304 folds into the ATP-grasp domain; the sequence is KMLWKGFGLP…FEKLVEKILE (200 aa). Position 135–190 (135–190) interacts with ATP; sequence VARLGLPLMVKPSREGSSVGLTKVDSADKLKSAVDLALKFDDIVLIEEWLSGDELT. Positions 258, 271, and 273 each coordinate Mg(2+).

Belongs to the D-alanine--D-alanine ligase family. Mg(2+) serves as cofactor. Requires Mn(2+) as cofactor.

It localises to the cytoplasm. It carries out the reaction 2 D-alanine + ATP = D-alanyl-D-alanine + ADP + phosphate + H(+). Its pathway is cell wall biogenesis; peptidoglycan biosynthesis. Functionally, cell wall formation. The sequence is that of D-alanine--D-alanine ligase from Actinobacillus succinogenes (strain ATCC 55618 / DSM 22257 / CCUG 43843 / 130Z).